We begin with the raw amino-acid sequence, 426 residues long: tRNA (guanine(37)-N(1))-methyltransferase (426 aa).

S-adenosyl-L-methionine is bound by residues His203, 242 to 243 (DL), 269 to 270 (DA), and Asn292. The interval 374 to 426 (RISFKMPTLKKRKDTENNDDQENNNNSSNNNNNNKIDYNEAVSSGGEGKKIKH) is disordered. Low complexity predominate over residues 396–407 (NNNNSSNNNNNN).

It belongs to the class I-like SAM-binding methyltransferase superfamily. TRM5/TYW2 family. Monomer.

It is found in the mitochondrion matrix. The protein localises to the nucleus. The protein resides in the cytoplasm. It carries out the reaction guanosine(37) in tRNA + S-adenosyl-L-methionine = N(1)-methylguanosine(37) in tRNA + S-adenosyl-L-homocysteine + H(+). Specifically methylates the N1 position of guanosine-37 in various cytoplasmic and mitochondrial tRNAs. Methylation is not dependent on the nature of the nucleoside 5' of the target nucleoside. This is the first step in the biosynthesis of wybutosine (yW), a modified base adjacent to the anticodon of tRNAs and required for accurate decoding. The chain is tRNA (guanine(37)-N(1))-methyltransferase (trmt5) from Heterostelium pallidum (strain ATCC 26659 / Pp 5 / PN500) (Cellular slime mold).